A 146-amino-acid polypeptide reads, in one-letter code: PTS system fructose-specific EIIA component (146 aa).

Positions 1 to 124 constitute a PTS EIIA type-4 domain; it reads MISVIISGHG…NLKAMSQQSF (124 aa). His9 acts as the Tele-phosphohistidine intermediate in catalysis. His9 is subject to Phosphohistidine; by HPr.

The protein localises to the cytoplasm. In terms of biological role, the phosphoenolpyruvate-dependent sugar phosphotransferase system (sugar PTS), a major carbohydrate active transport system, catalyzes the phosphorylation of incoming sugar substrates concomitantly with their translocation across the cell membrane. The enzyme II LevDE PTS system is involved in fructose transport. Its function is as follows. LevD and LevE act as negative regulators of the levanase operon. They may be involved in a PTS-mediated phosphorylation of a regulator. The protein is PTS system fructose-specific EIIA component of Bacillus subtilis (strain 168).